The chain runs to 170 residues: Peptide deformylase 1 (170 aa).

Residues C92 and H135 each coordinate Fe cation. The active site involves E136. H139 is a binding site for Fe cation.

Belongs to the polypeptide deformylase family. Fe(2+) is required as a cofactor.

It catalyses the reaction N-terminal N-formyl-L-methionyl-[peptide] + H2O = N-terminal L-methionyl-[peptide] + formate. In terms of biological role, removes the formyl group from the N-terminal Met of newly synthesized proteins. Requires at least a dipeptide for an efficient rate of reaction. N-terminal L-methionine is a prerequisite for activity but the enzyme has broad specificity at other positions. In Coxiella burnetii (strain RSA 493 / Nine Mile phase I), this protein is Peptide deformylase 1.